We begin with the raw amino-acid sequence, 214 residues long: Large ribosomal subunit protein uL3 (214 aa).

A disordered region spans residues 129–157 (FGRGPMSHGSKNHRRPGSIGAGTTPGRVF).

Belongs to the universal ribosomal protein uL3 family. In terms of assembly, part of the 50S ribosomal subunit. Forms a cluster with proteins L14 and L19.

In terms of biological role, one of the primary rRNA binding proteins, it binds directly near the 3'-end of the 23S rRNA, where it nucleates assembly of the 50S subunit. This Synechococcus sp. (strain JA-2-3B'a(2-13)) (Cyanobacteria bacterium Yellowstone B-Prime) protein is Large ribosomal subunit protein uL3.